The sequence spans 360 residues: Membrane-bound lytic murein transglycosylase C (360 aa).

The first 16 residues, 1–16 (MKKYLALALIAPLLVS), serve as a signal peptide directing secretion. A lipid anchor (N-palmitoyl cysteine) is attached at Cys-17. Residue Cys-17 is the site of S-diacylglycerol cysteine attachment.

The protein belongs to the transglycosylase Slt family.

Its subcellular location is the cell outer membrane. The catalysed reaction is Exolytic cleavage of the (1-&gt;4)-beta-glycosidic linkage between N-acetylmuramic acid (MurNAc) and N-acetylglucosamine (GlcNAc) residues in peptidoglycan, from either the reducing or the non-reducing ends of the peptidoglycan chains, with concomitant formation of a 1,6-anhydrobond in the MurNAc residue.. Its function is as follows. Murein-degrading enzyme. May play a role in recycling of muropeptides during cell elongation and/or cell division. This chain is Membrane-bound lytic murein transglycosylase C, found in Klebsiella pneumoniae subsp. pneumoniae (strain ATCC 700721 / MGH 78578).